Here is a 167-residue protein sequence, read N- to C-terminus: MNRIALYTGSFDPLTNGHLDVITSAASICDELVVGIGAHPSKAPLFSVDERAALIDRSCRDFLKERSCRLSVQPFFGLAVEAARAAGARILIRGLRNGSDFDYEAQMAGMNAAMAPEIRTVFFVASPGVGHITATLVRQIAAMGGDVSHFVPQPVLRALEAKSKTDG.

Ser10 serves as a coordination point for substrate. Residues 10–11 (SF) and His18 each bind ATP. The substrate site is built by Lys42, Ala79, and Arg93. Residues 94-96 (GLR), Glu104, and 129-135 (VGHITAT) contribute to the ATP site.

It belongs to the bacterial CoaD family. As to quaternary structure, homohexamer. It depends on Mg(2+) as a cofactor.

It localises to the cytoplasm. It carries out the reaction (R)-4'-phosphopantetheine + ATP + H(+) = 3'-dephospho-CoA + diphosphate. It functions in the pathway cofactor biosynthesis; coenzyme A biosynthesis; CoA from (R)-pantothenate: step 4/5. In terms of biological role, reversibly transfers an adenylyl group from ATP to 4'-phosphopantetheine, yielding dephospho-CoA (dPCoA) and pyrophosphate. The polypeptide is Phosphopantetheine adenylyltransferase (Methylocella silvestris (strain DSM 15510 / CIP 108128 / LMG 27833 / NCIMB 13906 / BL2)).